The primary structure comprises 179 residues: Large ribosomal subunit protein uL5 (179 aa).

Belongs to the universal ribosomal protein uL5 family. Part of the 50S ribosomal subunit; part of the 5S rRNA/L5/L18/L25 subcomplex. Contacts the 5S rRNA and the P site tRNA. Forms a bridge to the 30S subunit in the 70S ribosome.

This is one of the proteins that bind and probably mediate the attachment of the 5S RNA into the large ribosomal subunit, where it forms part of the central protuberance. In the 70S ribosome it contacts protein S13 of the 30S subunit (bridge B1b), connecting the 2 subunits; this bridge is implicated in subunit movement. Contacts the P site tRNA; the 5S rRNA and some of its associated proteins might help stabilize positioning of ribosome-bound tRNAs. This is Large ribosomal subunit protein uL5 from Herminiimonas arsenicoxydans.